Reading from the N-terminus, the 416-residue chain is Enterobactin exporter EntS (416 aa).

Residues 1 to 21 are Cytoplasmic-facing; the sequence is MNKQSWLLNLSLLKTHPAFRA. A helical membrane pass occupies residues 22 to 42; the sequence is VFLARFISIVSLGLLGVAVPV. At 43 to 55 the chain is on the periplasmic side; the sequence is QIQMMTHSTWQVG. Residues 56–76 form a helical membrane-spanning segment; that stretch reads LSVTLTGGAMFVGLMVGGVLA. The Cytoplasmic portion of the chain corresponds to 77–83; that stretch reads DRYERKK. A helical transmembrane segment spans residues 84 to 104; it reads VILLARGTCGIGFIGLCLNAL. Over 105–109 the chain is Periplasmic; that stretch reads LPEPS. The helical transmembrane segment at 110–130 threads the bilayer; it reads LLAIYLLGLWDGFFASLGVTA. Over 131-156 the chain is Cytoplasmic; the sequence is LLAATPALVGRENLMQAGAITMLTVR. The helical transmembrane segment at 157-177 threads the bilayer; sequence LGSVISPMIGGLLLATGGVAW. Position 178 (N178) is a topological domain, periplasmic. A helical transmembrane segment spans residues 179–199; it reads YGLAAAGTFITLLPLLSLPAL. Residues 200–218 lie on the Cytoplasmic side of the membrane; the sequence is PPPPQPREHPLKSLLAGFR. A helical membrane pass occupies residues 219–239; that stretch reads FLLASPLVGGIALLGGLLTMA. Topologically, residues 240–256 are periplasmic; the sequence is SAVRVLYPALADNWQMS. A helical membrane pass occupies residues 257 to 277; sequence AAQIGFLYAAIPLGAAIGALT. The Cytoplasmic segment spans residues 278-287; that stretch reads SGKLAHSVRP. Residues 288–307 traverse the membrane as a helical segment; that stretch reads GLLMLLSTLGAFLAIGLFGL. Residues 308-313 are Periplasmic-facing; that stretch reads MPMWIL. Residues 314–336 traverse the membrane as a helical segment; it reads GVVCLALFGWLSAVSSLLQYTML. Residues 337–356 are Cytoplasmic-facing; it reads QTQTPEAMLGRINGLWTAQN. The helical transmembrane segment at 357 to 377 threads the bilayer; the sequence is VTGDAIGAALLGGLGAMMTPV. Residue A378 is a topological domain, periplasmic. The chain crosses the membrane as a helical span at residues 379 to 399; sequence SASASGFGLLIIGVLLLLVLV. Residues 400 to 416 lie on the Cytoplasmic side of the membrane; that stretch reads ELRRFRQTPPQVTASGS.

The protein belongs to the major facilitator superfamily. EntS (TC 2.A.1.38) family.

It localises to the cell inner membrane. Functionally, component of an export pathway for enterobactin. The chain is Enterobactin exporter EntS from Escherichia coli O6:K15:H31 (strain 536 / UPEC).